The primary structure comprises 144 residues: Ribonuclease H (144 aa).

The region spanning 1 to 141 is the RNase H type-1 domain; sequence MKKVEIFTDG…ADRLASEAAD (141 aa). The Mg(2+) site is built by Asp-9, Glu-47, Asp-69, and Asp-133.

This sequence belongs to the RNase H family. In terms of assembly, monomer. The cofactor is Mg(2+).

It localises to the cytoplasm. It carries out the reaction Endonucleolytic cleavage to 5'-phosphomonoester.. Endonuclease that specifically degrades the RNA of RNA-DNA hybrids. This Erythrobacter litoralis (strain HTCC2594) protein is Ribonuclease H.